A 297-amino-acid chain; its full sequence is 33 kDa chaperonin (297 aa).

Cystine bridges form between cysteine 232/cysteine 234 and cysteine 266/cysteine 269.

Belongs to the HSP33 family. Under oxidizing conditions two disulfide bonds are formed involving the reactive cysteines. Under reducing conditions zinc is bound to the reactive cysteines and the protein is inactive.

The protein resides in the cytoplasm. Functionally, redox regulated molecular chaperone. Protects both thermally unfolding and oxidatively damaged proteins from irreversible aggregation. Plays an important role in the bacterial defense system toward oxidative stress. This chain is 33 kDa chaperonin, found in Pseudomonas paraeruginosa (strain DSM 24068 / PA7) (Pseudomonas aeruginosa (strain PA7)).